A 344-amino-acid polypeptide reads, in one-letter code: tRNA N6-adenosine threonylcarbamoyltransferase (344 aa).

Residues histidine 116 and histidine 120 each contribute to the Fe cation site. Substrate-binding positions include 138-142, aspartate 171, glycine 184, aspartate 188, and asparagine 277; that span reads LVSGG. Aspartate 307 contacts Fe cation.

The protein belongs to the KAE1 / TsaD family. Fe(2+) serves as cofactor.

It localises to the cytoplasm. The enzyme catalyses L-threonylcarbamoyladenylate + adenosine(37) in tRNA = N(6)-L-threonylcarbamoyladenosine(37) in tRNA + AMP + H(+). Its function is as follows. Required for the formation of a threonylcarbamoyl group on adenosine at position 37 (t(6)A37) in tRNAs that read codons beginning with adenine. Is involved in the transfer of the threonylcarbamoyl moiety of threonylcarbamoyl-AMP (TC-AMP) to the N6 group of A37, together with TsaE and TsaB. TsaD likely plays a direct catalytic role in this reaction. The sequence is that of tRNA N6-adenosine threonylcarbamoyltransferase from Latilactobacillus sakei subsp. sakei (strain 23K) (Lactobacillus sakei subsp. sakei).